The chain runs to 839 residues: Eukaryotic translation initiation factor 3 subunit C (839 aa).

The disordered stretch occupies residues 1 to 93 (MSRFFVAGYN…DSDSEDEGRR (93 aa)). Composition is skewed to acidic residues over residues 14–27 (SSEE…DEEL) and 34–58 (GEQE…SDSD). Residues 585-759 (FHQHINLELL…AFIQFASTEP (175 aa)) form the PCI domain. Positions 783-839 (EKTSSNGYGKKQPQQQQQQQQQQQQQQQQQKDLLQEDNSRFRYANVNTNNDEFQTTA) are disordered. A compositionally biased stretch (low complexity) spans 794-812 (QPQQQQQQQQQQQQQQQQQ). The segment covering 827-839 (NVNTNNDEFQTTA) has biased composition (polar residues).

It belongs to the eIF-3 subunit C family. In terms of assembly, component of the eukaryotic translation initiation factor 3 (eIF-3) complex.

The protein resides in the cytoplasm. Its function is as follows. Component of the eukaryotic translation initiation factor 3 (eIF-3) complex, which is involved in protein synthesis of a specialized repertoire of mRNAs and, together with other initiation factors, stimulates binding of mRNA and methionyl-tRNAi to the 40S ribosome. The eIF-3 complex specifically targets and initiates translation of a subset of mRNAs involved in cell proliferation. In Scheffersomyces stipitis (strain ATCC 58785 / CBS 6054 / NBRC 10063 / NRRL Y-11545) (Yeast), this protein is Eukaryotic translation initiation factor 3 subunit C.